The chain runs to 283 residues: MKKVGVIPNINKDKDLEVTKSVVKWLLEHDSEPYLNEIVASKMGYDEYGKKSTDIYSKSDFIIALGGDGTILNVARLCAPFGTPIFAVNLGHLGFLTEVDMNEVFVSLDKIYKGEYTVEKRMMLEANVVKNDMEIINFRALNDIVITRGAFSRMARINAYVNNNYVDTYLADGVIIATPTGSTAYSLSAGGPIVYPTVEVIIITPICPHTLYSRSIIVSPDDVIRLEISEENQDLMITTDGQQGYKLDYRDIIYIKKSNEYTNLIRVKNTNFFDLLRDKLTER.

D68 functions as the Proton acceptor in the catalytic mechanism. Residues 68-69, 142-143, R153, D172, 183-188, and Q242 each bind NAD(+); these read DG, ND, and TAYSLS.

It belongs to the NAD kinase family. Requires a divalent metal cation as cofactor.

Its subcellular location is the cytoplasm. The enzyme catalyses NAD(+) + ATP = ADP + NADP(+) + H(+). Its function is as follows. Involved in the regulation of the intracellular balance of NAD and NADP, and is a key enzyme in the biosynthesis of NADP. Catalyzes specifically the phosphorylation on 2'-hydroxyl of the adenosine moiety of NAD to yield NADP. This chain is NAD kinase, found in Thermoanaerobacter pseudethanolicus (strain ATCC 33223 / 39E) (Clostridium thermohydrosulfuricum).